The chain runs to 215 residues: 3-isopropylmalate dehydratase small subunit (215 aa).

This sequence belongs to the LeuD family. LeuD type 1 subfamily. Heterodimer of LeuC and LeuD.

The enzyme catalyses (2R,3S)-3-isopropylmalate = (2S)-2-isopropylmalate. It functions in the pathway amino-acid biosynthesis; L-leucine biosynthesis; L-leucine from 3-methyl-2-oxobutanoate: step 2/4. Its function is as follows. Catalyzes the isomerization between 2-isopropylmalate and 3-isopropylmalate, via the formation of 2-isopropylmaleate. The polypeptide is 3-isopropylmalate dehydratase small subunit (Ectopseudomonas mendocina (strain ymp) (Pseudomonas mendocina)).